The following is a 135-amino-acid chain: Small ribosomal subunit protein uS12 (135 aa).

D89 is modified (3-methylthioaspartic acid). The segment at 114–135 (RSRYGAKKGAAKQAAAAKSKKK) is disordered. The segment covering 124–135 (AKQAAAAKSKKK) has biased composition (low complexity).

This sequence belongs to the universal ribosomal protein uS12 family. As to quaternary structure, part of the 30S ribosomal subunit. Contacts proteins S8 and S17. May interact with IF1 in the 30S initiation complex.

Functionally, with S4 and S5 plays an important role in translational accuracy. In terms of biological role, interacts with and stabilizes bases of the 16S rRNA that are involved in tRNA selection in the A site and with the mRNA backbone. Located at the interface of the 30S and 50S subunits, it traverses the body of the 30S subunit contacting proteins on the other side and probably holding the rRNA structure together. The combined cluster of proteins S8, S12 and S17 appears to hold together the shoulder and platform of the 30S subunit. This Amoebophilus asiaticus (strain 5a2) protein is Small ribosomal subunit protein uS12.